A 415-amino-acid chain; its full sequence is Methylmalonic aciduria type A homolog, mitochondrial (415 aa).

A mitochondrion-targeting transit peptide spans 1-62 (MTISTLLLSP…LLSDGFRRTL (62 aa)). GTP contacts are provided by residues 147 to 155 (GPPGAGKST), Asp-289, and 325 to 327 (SAR).

It belongs to the SIMIBI class G3E GTPase family. ArgK/MeaB subfamily. As to quaternary structure, homodimer. Interacts with MMUT (the apoenzyme form); the interaction is GTP dependent.

It is found in the mitochondrion. It localises to the cytoplasm. It catalyses the reaction GTP + H2O = GDP + phosphate + H(+). Its activity is regulated as follows. GTPase activity is stimulated by MMUT. In terms of biological role, GTPase, binds and hydrolyzes GTP. Involved in intracellular vitamin B12 metabolism, mediates the transport of cobalamin (Cbl) into mitochondria for the final steps of adenosylcobalamin (AdoCbl) synthesis. Functions as a G-protein chaperone that assists AdoCbl cofactor delivery from MMAB to the methylmalonyl-CoA mutase (MMUT). Plays a dual role as both a protectase and a reactivase for MMUT. Protects MMUT from progressive inactivation by oxidation by decreasing the rate of the formation of the oxidized inactive cofactor hydroxocobalamin (OH2Cbl). Additionally acts a reactivase by promoting the replacement of OH2Cbl by the active cofactor AdoCbl, restoring the activity of MMUT in the presence and hydrolysis of GTP. The sequence is that of Methylmalonic aciduria type A homolog, mitochondrial from Mus musculus (Mouse).